Reading from the N-terminus, the 140-residue chain is Acyl carrier protein 1, chloroplastic (140 aa).

A chloroplast-targeting transit peptide spans 1–56 (MASAAAGASICIKSASFSPLAPGRISSLRSVSLPVSRKSFPSLKSSKSSFALRVSC). One can recognise a Carrier domain in the interval 60 to 135 (PETVAKVCGI…DAADLIEKLM (76 aa)). An O-(pantetheine 4'-phosphoryl)serine modification is found at S95.

This sequence belongs to the acyl carrier protein (ACP) family. 4'-phosphopantetheine is transferred from CoA to a specific serine of apo-ACP by acpS. This modification is essential for activity because fatty acids are bound in thioester linkage to the sulfhydryl of the prosthetic group.

It localises to the plastid. It is found in the chloroplast. It functions in the pathway lipid metabolism; fatty acid biosynthesis. Carrier of the growing fatty acid chain in fatty acid biosynthesis. This Cuphea lanceolata (Cigar flower) protein is Acyl carrier protein 1, chloroplastic (ACL1.1).